The following is a 246-amino-acid chain: NAD-dependent protein deacylase (246 aa).

The region spanning methionine 1–aspartate 246 is the Deacetylase sirtuin-type domain. Residue glycine 21–tryptophan 41 coordinates NAD(+). Tyrosine 66 and arginine 69 together coordinate substrate. An NAD(+)-binding site is contributed by glutamine 101 to aspartate 104. Histidine 123 serves as the catalytic Proton acceptor. Residues glycine 191–serine 193, asparagine 217–glutamate 219, and alanine 235 contribute to the NAD(+) site.

It belongs to the sirtuin family. Class III subfamily.

The protein localises to the cytoplasm. The enzyme catalyses N(6)-acetyl-L-lysyl-[protein] + NAD(+) + H2O = 2''-O-acetyl-ADP-D-ribose + nicotinamide + L-lysyl-[protein]. The catalysed reaction is N(6)-succinyl-L-lysyl-[protein] + NAD(+) + H2O = 2''-O-succinyl-ADP-D-ribose + nicotinamide + L-lysyl-[protein]. Its function is as follows. NAD-dependent lysine deacetylase and desuccinylase that specifically removes acetyl and succinyl groups on target proteins. Modulates the activities of several proteins which are inactive in their acylated form. The protein is NAD-dependent protein deacylase of Deinococcus radiodurans (strain ATCC 13939 / DSM 20539 / JCM 16871 / CCUG 27074 / LMG 4051 / NBRC 15346 / NCIMB 9279 / VKM B-1422 / R1).